A 162-amino-acid polypeptide reads, in one-letter code: UPF0260 protein CC_3276 (162 aa).

The protein belongs to the UPF0260 family.

This is UPF0260 protein CC_3276 from Caulobacter vibrioides (strain ATCC 19089 / CIP 103742 / CB 15) (Caulobacter crescentus).